A 420-amino-acid polypeptide reads, in one-letter code: MPIFSSLNSFLRRHKKKLIVTATLTFSAYFLVNQFIIKKLKNFQNSLRQELFVKEQIKRRFVQTQNDCYLTILALLPVLTQPIINHLPIELITQALKLKKTNSNPTPQEISDSLLTTDNLTMHQNTNDSSDLSHYMSLSKTELWKLLKIKTLTRTLTLMYSISGLLLLTRLQLNILARRSYLESAIILAGGKVNDTETSQDYFIEQSYLSLSWWLLNKGWLKISDLVEKVVTEKFNTINARTELSINKFDDLLCEMVNELSTNHNQEILNAVFPISYDNLIESLLNTNPELIKELDIEDSIMLKLINETTYLVSNEAFGDILINMVDSCKSTLIENLLLSLDPENAYTNQEKVIDISNIKQFKLANLLAQLSIQCGVLCDNNNLMNDTFSNELSGNIYMNNLNEIESLDEFSASIYSNFE.

Residues 1–16 (MPIFSSLNSFLRRHKK) are Peroxisomal-facing. A helical transmembrane segment spans residues 17–37 (KLIVTATLTFSAYFLVNQFII). Residues 38-420 (KKLKNFQNSL…FSASIYSNFE (383 aa)) are Cytoplasmic-facing.

Belongs to the peroxin-3 family.

The protein resides in the peroxisome membrane. Its function is as follows. Involved in peroxisome biosynthesis. In Debaryomyces hansenii (strain ATCC 36239 / CBS 767 / BCRC 21394 / JCM 1990 / NBRC 0083 / IGC 2968) (Yeast), this protein is Peroxisomal biogenesis factor 3 (PEX3).